Consider the following 437-residue polypeptide: MDSLDNTTLLLAPSSLLPDNLTLSPNAGSPSASTLSPLAVTSSPGPGLSLAPSPSIGFSPEATPTPEPTSSSLTVGVAGQGSSAFPRPWIPHEPPFWDTPLNHGLNVFVGAALCITMLGLGCTVDVNHFGAHVRRPVGALLAALCQFGFLPLLAFLLALIFKLDEVAAVAVLLCGCCPGGNLSNLMSLLVDGDMNLSIIMTISSTLLALVLMPLCLWIYSRAWINTPLVQLLPLGAVTLTLCSTLIPIGLGVFIRYKYNRVADYIVKVSLWSLLVTLVVLFIMTGTMLGPELLASIPATVYVVAIFMPLAGYASGYGLATLFHLPPNCKRTVCLETGSQNVQLCTAILKLAFPPRFIGSMYMFPLLYALFQSAEAGVFVLIYKMYGSEILHKREALDEDEDTDISYKKLKEEEMADTSYGTVGTDDLVMMETTQTAL.

At 1-103 (MDSLDNTTLL…PPFWDTPLNH (103 aa)) the chain is on the extracellular side. N-linked (GlcNAc...) asparagine glycans are attached at residues Asn-6 and Asn-20. The disordered stretch occupies residues 15-79 (SLLPDNLTLS…SSSLTVGVAG (65 aa)). The span at 22–41 (TLSPNAGSPSASTLSPLAVT) shows a compositional bias: polar residues. Residues 42 to 74 (SSPGPGLSLAPSPSIGFSPEATPTPEPTSSSLT) show a composition bias toward low complexity. Residues 104–124 (GLNVFVGAALCITMLGLGCTV) form a helical membrane-spanning segment. The Cytoplasmic segment spans residues 125-140 (DVNHFGAHVRRPVGAL). The helical transmembrane segment at 141 to 161 (LAALCQFGFLPLLAFLLALIF) threads the bilayer. At 162 to 197 (KLDEVAAVAVLLCGCCPGGNLSNLMSLLVDGDMNLS) the chain is on the extracellular side. 2 N-linked (GlcNAc...) asparagine glycosylation sites follow: Asn-181 and Asn-195. Residues 198–218 (IIMTISSTLLALVLMPLCLWI) form a helical membrane-spanning segment. Over 219 to 233 (YSRAWINTPLVQLLP) the chain is Cytoplasmic. A helical transmembrane segment spans residues 234 to 254 (LGAVTLTLCSTLIPIGLGVFI). Over 255–267 (RYKYNRVADYIVK) the chain is Extracellular. A helical membrane pass occupies residues 268–288 (VSLWSLLVTLVVLFIMTGTML). The Cytoplasmic segment spans residues 289 to 291 (GPE). The helical transmembrane segment at 292–312 (LLASIPATVYVVAIFMPLAGY) threads the bilayer. Residues 313–360 (ASGYGLATLFHLPPNCKRTVCLETGSQNVQLCTAILKLAFPPRFIGSM) are Extracellular-facing. Residues 361 to 381 (YMFPLLYALFQSAEAGVFVLI) traverse the membrane as a helical segment. Over 382–437 (YKMYGSEILHKREALDEDEDTDISYKKLKEEEMADTSYGTVGTDDLVMMETTQTAL) the chain is Cytoplasmic.

This sequence belongs to the bile acid:sodium symporter (BASS) (TC 2.A.28) family. Activated following N-terminal proteolytic cleavage by thrombin and/or proteases. Highest expression in the brain and significantly above background levels in the eye, prostate, and whole embryo tissue preparations.

Its subcellular location is the cell membrane. In terms of biological role, transporter for bile acids. This Mus musculus (Mouse) protein is Sodium/bile acid cotransporter 4 (Slc10a4).